The primary structure comprises 261 residues: Serine/arginine-rich splicing factor 12 (261 aa).

An RRM domain is found at 10–88 (TSLFIRNVAD…RQIEIQFAQG (79 aa)). The tract at residues 86–261 (AQGDRKTPGQ…SRSYRHKNSW (176 aa)) is disordered. The segment covering 88-109 (GDRKTPGQMKSKERHPCSPSDH) has biased composition (basic and acidic residues). 2 stretches are compositionally biased toward basic residues: residues 110–122 (RRSR…RTRS) and 178–191 (GRSR…RSKS). A compositionally biased stretch (low complexity) spans 192–209 (IGKSQSSSPQKQTSSGTK). The segment covering 230–239 (GYTNSETKVQ) has biased composition (polar residues). Over residues 240 to 261 (TAKHSHFRSHSRSRSYRHKNSW) the composition is skewed to basic residues.

Belongs to the splicing factor SR family. Expressed in testis.

The protein resides in the nucleus. Splicing factor that seems to antagonize SR proteins in pre-mRNA splicing regulation. This chain is Serine/arginine-rich splicing factor 12 (SRSF12), found in Homo sapiens (Human).